The chain runs to 242 residues: Lactate utilization protein A 2 (242 aa).

The protein belongs to the LutA/YkgE family.

In terms of biological role, is involved in L-lactate degradation and allows cells to grow with lactate as the sole carbon source. In Bacillus cereus (strain 03BB102), this protein is Lactate utilization protein A 2.